Reading from the N-terminus, the 592-residue chain is Bifunctional purine biosynthesis protein ADE17 (592 aa).

An MGS-like domain is found at 1-147; the sequence is MANYTKTAIL…KNHARVTILS (147 aa). IMP is bound by residues 35–38, 65–68, 102–103, and 126–127; these read SGGT, RVKT, CN, and DI. Lys-138 acts as the Proton donor/acceptor; for FAICAR cyclization activity in catalysis. 5-amino-1-(5-phospho-beta-D-ribosyl)imidazole-4-carboxamide contacts are provided by residues 206–207, His-267, Gly-315, Asp-338, Asn-430, and Arg-450; that span reads RY. The active-site Proton acceptor; for AICAR formyltransferase activity is the His-267. (6R)-10-formyltetrahydrofolate is bound at residue Ile-451. Phe-541 provides a ligand contact to 5-amino-1-(5-phospho-beta-D-ribosyl)imidazole-4-carboxamide. (6R)-10-formyltetrahydrofolate is bound by residues Asp-546 and 565-566; that span reads SV. A 5-amino-1-(5-phospho-beta-D-ribosyl)imidazole-4-carboxamide-binding site is contributed by Arg-588.

Belongs to the PurH family. Homodimer.

Its subcellular location is the cytoplasm. The protein resides in the cytosol. The catalysed reaction is (6R)-10-formyltetrahydrofolate + 5-amino-1-(5-phospho-beta-D-ribosyl)imidazole-4-carboxamide = 5-formamido-1-(5-phospho-D-ribosyl)imidazole-4-carboxamide + (6S)-5,6,7,8-tetrahydrofolate. The enzyme catalyses IMP + H2O = 5-formamido-1-(5-phospho-D-ribosyl)imidazole-4-carboxamide. It functions in the pathway purine metabolism; IMP biosynthesis via de novo pathway; 5-formamido-1-(5-phospho-D-ribosyl)imidazole-4-carboxamide from 5-amino-1-(5-phospho-D-ribosyl)imidazole-4-carboxamide (10-formyl THF route): step 1/1. It participates in purine metabolism; IMP biosynthesis via de novo pathway; IMP from 5-formamido-1-(5-phospho-D-ribosyl)imidazole-4-carboxamide: step 1/1. Bifunctional enzyme that catalyzes the last two steps of purine biosynthesis. Acts as a transformylase that incorporates a formyl group to the AMP analog AICAR (5-amino-1-(5-phospho-beta-D-ribosyl)imidazole-4-carboxamide) to produce the intermediate formyl-AICAR (FAICAR). Also catalyzes the cyclization of FAICAR to IMP. This chain is Bifunctional purine biosynthesis protein ADE17, found in Saccharomyces cerevisiae (strain ATCC 204508 / S288c) (Baker's yeast).